The sequence spans 173 residues: Adenine phosphoribosyltransferase (173 aa).

It belongs to the purine/pyrimidine phosphoribosyltransferase family. Homodimer.

The protein resides in the cytoplasm. The enzyme catalyses AMP + diphosphate = 5-phospho-alpha-D-ribose 1-diphosphate + adenine. The protein operates within purine metabolism; AMP biosynthesis via salvage pathway; AMP from adenine: step 1/1. Functionally, catalyzes a salvage reaction resulting in the formation of AMP, that is energically less costly than de novo synthesis. This is Adenine phosphoribosyltransferase from Desulfitobacterium hafniense (strain Y51).